Here is a 252-residue protein sequence, read N- to C-terminus: Diphthine synthase (252 aa).

S-adenosyl-L-methionine-binding positions include L9, D85, V88, 113-114 (SI), L165, A204, and H229.

The protein belongs to the diphthine synthase family. As to quaternary structure, homodimer.

It carries out the reaction 2-[(3S)-amino-3-carboxypropyl]-L-histidyl-[translation elongation factor 2] + 3 S-adenosyl-L-methionine = diphthine-[translation elongation factor 2] + 3 S-adenosyl-L-homocysteine + 3 H(+). It functions in the pathway protein modification; peptidyl-diphthamide biosynthesis. Its function is as follows. S-adenosyl-L-methionine-dependent methyltransferase that catalyzes the trimethylation of the amino group of the modified target histidine residue in translation elongation factor 2 (EF-2), to form an intermediate called diphthine. The three successive methylation reactions represent the second step of diphthamide biosynthesis. This chain is Diphthine synthase, found in Methanocorpusculum labreanum (strain ATCC 43576 / DSM 4855 / Z).